Here is a 206-residue protein sequence, read N- to C-terminus: MKKYFITAISTDSGKTLVSAILTNALQADYWKPVQAGLEETDSNTIRTLLHSGHSIIHPEAYALKQAVSPHAAARNEGVEIVLAAIQLPDTNGNDLIIEGAGGVLVPLNDTDVVADLITQFDAEVILVSNLYLGSINHTLLTAQELKRRNIRVKGIVFNGPRNEESERIILKHTGYKVLLHVSPEEKITKEVVTAYAVKLFDNWYE.

Position 12–17 (12–17 (DSGKTL)) interacts with ATP. Residue threonine 16 coordinates Mg(2+). Lysine 32 is a catalytic residue. Glutamate 99 serves as a coordination point for Mg(2+). 99 to 102 (EGAG) contributes to the ATP binding site.

This sequence belongs to the dethiobiotin synthetase family. Homodimer. Mg(2+) is required as a cofactor.

The protein resides in the cytoplasm. The enzyme catalyses (7R,8S)-7,8-diammoniononanoate + CO2 + ATP = (4R,5S)-dethiobiotin + ADP + phosphate + 3 H(+). Its pathway is cofactor biosynthesis; biotin biosynthesis; biotin from 7,8-diaminononanoate: step 1/2. Catalyzes a mechanistically unusual reaction, the ATP-dependent insertion of CO2 between the N7 and N8 nitrogen atoms of 7,8-diaminopelargonic acid (DAPA, also called 7,8-diammoniononanoate) to form a ureido ring. This Cytophaga hutchinsonii (strain ATCC 33406 / DSM 1761 / CIP 103989 / NBRC 15051 / NCIMB 9469 / D465) protein is ATP-dependent dethiobiotin synthetase BioD.